Reading from the N-terminus, the 177-residue chain is Large ribosomal subunit protein uL6 (177 aa).

The segment covering 152 to 171 (RPPEPYKGKGVRYDDEEVRR) has biased composition (basic and acidic residues). The tract at residues 152–177 (RPPEPYKGKGVRYDDEEVRRKEAKKK) is disordered.

Belongs to the universal ribosomal protein uL6 family. In terms of assembly, part of the 50S ribosomal subunit.

Functionally, this protein binds to the 23S rRNA, and is important in its secondary structure. It is located near the subunit interface in the base of the L7/L12 stalk, and near the tRNA binding site of the peptidyltransferase center. The protein is Large ribosomal subunit protein uL6 of Shewanella sp. (strain ANA-3).